Consider the following 101-residue polypeptide: UPF0235 protein Maeo_0841 (101 aa).

It belongs to the UPF0235 family.

This is UPF0235 protein Maeo_0841 from Methanococcus aeolicus (strain ATCC BAA-1280 / DSM 17508 / OCM 812 / Nankai-3).